The primary structure comprises 101 residues: Chaperone modulatory protein CbpM (101 aa).

The protein belongs to the CbpM family.

Interacts with CbpA and inhibits both the DnaJ-like co-chaperone activity and the DNA binding activity of CbpA. Together with CbpA, modulates the activity of the DnaK chaperone system. Does not inhibit the co-chaperone activity of DnaJ. In Pseudomonas putida (strain ATCC 700007 / DSM 6899 / JCM 31910 / BCRC 17059 / LMG 24140 / F1), this protein is Chaperone modulatory protein CbpM.